The following is a 162-amino-acid chain: MATLQSLADLGQANKAALATADTEAPVHVQKLDAQGRAYATGKRKDAVARVWIKPGAGTITVNDRPVDTYFARPVLRMILQQPLHVANRVDQYDIVVTVTGGGLSGQAGAVRHGLARALTYYEPELRSPLKREGFLTRDPRVVERKKYGRKKARRSFQFSKR.

The protein belongs to the universal ribosomal protein uS9 family.

The polypeptide is Small ribosomal subunit protein uS9 (Methylobacterium nodulans (strain LMG 21967 / CNCM I-2342 / ORS 2060)).